Consider the following 124-residue polypeptide: MRIYETMFIIKPDVSEEERNKLVENVKKFLEERVKAQVETVDRWGIRKLAYKIGKYFEGDYTVMYFRSNGQGLDQLENYFKVHPEFMRWQTFRREDLEKKERRAARQKTGETQENVSQEESSTN.

Residues 100 to 124 (KERRAARQKTGETQENVSQEESSTN) are disordered. Over residues 110-124 (GETQENVSQEESSTN) the composition is skewed to polar residues.

It belongs to the bacterial ribosomal protein bS6 family.

In terms of biological role, binds together with bS18 to 16S ribosomal RNA. This is Small ribosomal subunit protein bS6 from Fervidobacterium nodosum (strain ATCC 35602 / DSM 5306 / Rt17-B1).